The sequence spans 203 residues: Superoxide dismutase [Mn] (203 aa).

Mn(2+) is bound by residues histidine 31, histidine 79, aspartate 161, and histidine 165.

The protein belongs to the iron/manganese superoxide dismutase family. Mn(2+) serves as cofactor.

It carries out the reaction 2 superoxide + 2 H(+) = H2O2 + O2. Its function is as follows. Destroys superoxide anion radicals which are normally produced within the cells and which are toxic to biological systems. In Haloarcula marismortui (strain ATCC 43049 / DSM 3752 / JCM 8966 / VKM B-1809) (Halobacterium marismortui), this protein is Superoxide dismutase [Mn] (sod).